A 410-amino-acid chain; its full sequence is LL-diaminopimelate aminotransferase (410 aa).

Substrate contacts are provided by Y15 and G42. Residues Y72, 108–109 (AK), Y132, N188, Y219, and 247–249 (SFS) contribute to the pyridoxal 5'-phosphate site. Residues K109, Y132, and N188 each coordinate substrate. At K250 the chain carries N6-(pyridoxal phosphate)lysine. Pyridoxal 5'-phosphate contacts are provided by R258 and N293. Substrate contacts are provided by N293 and R389.

Belongs to the class-I pyridoxal-phosphate-dependent aminotransferase family. LL-diaminopimelate aminotransferase subfamily. Homodimer. Pyridoxal 5'-phosphate serves as cofactor.

It carries out the reaction (2S,6S)-2,6-diaminopimelate + 2-oxoglutarate = (S)-2,3,4,5-tetrahydrodipicolinate + L-glutamate + H2O + H(+). Its pathway is amino-acid biosynthesis; L-lysine biosynthesis via DAP pathway; LL-2,6-diaminopimelate from (S)-tetrahydrodipicolinate (aminotransferase route): step 1/1. Its function is as follows. Involved in the synthesis of meso-diaminopimelate (m-DAP or DL-DAP), required for both lysine and peptidoglycan biosynthesis. Catalyzes the direct conversion of tetrahydrodipicolinate to LL-diaminopimelate. The protein is LL-diaminopimelate aminotransferase of Bacteroides fragilis (strain YCH46).